The primary structure comprises 368 residues: Molybdenum import ATP-binding protein ModC (368 aa).

Residues 1–231 (MKGLQVAFKQ…QAMRPWQSFS (231 aa)) form the ABC transporter domain. 33 to 40 (GRSGAGKT) lines the ATP pocket. Residues 292–363 (KTSIRNIIEA…IKGVSVTQRD (72 aa)) enclose the Mop domain.

The protein belongs to the ABC transporter superfamily. Molybdate importer (TC 3.A.1.8) family. In terms of assembly, the complex is composed of two ATP-binding proteins (ModC), two transmembrane proteins (ModB) and a solute-binding protein (ModA).

The protein localises to the cell inner membrane. It carries out the reaction molybdate(out) + ATP + H2O = molybdate(in) + ADP + phosphate + H(+). In terms of biological role, part of the ABC transporter complex ModABC involved in molybdenum import. Responsible for energy coupling to the transport system. In Vibrio vulnificus (strain YJ016), this protein is Molybdenum import ATP-binding protein ModC.